The following is a 399-amino-acid chain: MLGIVLAGGEGKRLMPLTADRAKPAVTFGGTYRLVDFVLSNLVNGDILRICVLTQYKSHSLDRHITTTWRMSSLLGNYVTPVPAQQRLGPRWFLGSADAILQSLNLVHDEQPEYVAVFGADHVYRMDPRQMLAQHIESGAGVTVAGIRVPRAESPSFGVITPGSDGQTVTGFLEKPADPPGLADDPGCVFASMGNYVFTTKALVEALHRDAEDPDSVHDMGGSILPQLTDRGEAALYDFSANHVPGETTRDQGYWRDVGTLDAYYDAHMDLIAERPAFNLYNRDWPVYTHSTQLSPARFNAGGIASESIISAGCLIRGQVTRSVLSPGVVVDPGAVVQGSVLHDNVHIGRGAVVRGAVLDKNVQVPPGATIGVNPQRDGELYTVSKGGVIALGKGQRVP.

Alpha-D-glucose 1-phosphate is bound by residues G158, E174 to K175, and S192.

It belongs to the bacterial/plant glucose-1-phosphate adenylyltransferase family. Homotetramer.

It catalyses the reaction alpha-D-glucose 1-phosphate + ATP + H(+) = ADP-alpha-D-glucose + diphosphate. It functions in the pathway glycan biosynthesis; glycogen biosynthesis. Functionally, involved in the biosynthesis of ADP-glucose, a building block required for the elongation reactions to produce glycogen. Catalyzes the reaction between ATP and alpha-D-glucose 1-phosphate (G1P) to produce pyrophosphate and ADP-Glc. This is Glucose-1-phosphate adenylyltransferase from Streptomyces coelicolor (strain ATCC BAA-471 / A3(2) / M145).